The sequence spans 275 residues: Membrane protein insertase YidC 1 (275 aa).

Residues 1 to 25 (MRKVLRVKKNIKIARIVPLVLLLVA) form the signal peptide. Residue cysteine 26 is the site of N-palmitoyl cysteine attachment. The S-diacylglycerol cysteine moiety is linked to residue cysteine 26. 5 helical membrane passes run 58–78 (SIGVGIILFTLTIRLMLMPLF), 129–149 (YASLLPLLIQMPVMIALFQAL), 171–191 (LYLLPVLAAVFTFLSTWLTNL), 198–216 (VMMTVMIYVMPLMIFFMGF), and 222–240 (VVLYWTVSNAFQVVQLLLL).

It belongs to the OXA1/ALB3/YidC family. Type 2 subfamily.

The protein resides in the cell membrane. Functionally, required for the insertion and/or proper folding and/or complex formation of integral membrane proteins into the membrane. Involved in integration of membrane proteins that insert both dependently and independently of the Sec translocase complex, as well as at least some lipoproteins. The sequence is that of Membrane protein insertase YidC 1 from Streptococcus pyogenes serotype M1.